We begin with the raw amino-acid sequence, 101 residues long: MIPGELLTDDGEHTLNPGRRTLTLVVQNTADRPIQVGSHYHFAETNGALGFDRAAARGMRLNIASGAAVRFEPGQQRTVELVDFSGDRIVYGFRGLIQGKL.

This sequence belongs to the urease beta subunit family. In terms of assembly, heterotrimer of UreA (gamma), UreB (beta) and UreC (alpha) subunits. Three heterotrimers associate to form the active enzyme.

It is found in the cytoplasm. It catalyses the reaction urea + 2 H2O + H(+) = hydrogencarbonate + 2 NH4(+). The protein operates within nitrogen metabolism; urea degradation; CO(2) and NH(3) from urea (urease route): step 1/1. This Variovorax paradoxus (strain S110) protein is Urease subunit beta.